The following is a 294-amino-acid chain: MTAKIIDGKVIAADLRARVADEVARVKREHNLVPGLAVVLVGNDPASEVYVRSKGTQTQAAGMASFEHKLPADVSQADLLAVVAKLNRDPAVHGILVQLPLPKGLNTEAVINAIDPAKDVDGLHPNNAGRLAGGFEALSPCTPLGSIILTKSVHPSLEGLNAIVIGRSNLVGRPLVQLLLNENATVTIAHSRSRDLPGLVKRADLVYAAVGKPEMVRGDWLKPGATVIDIGISRIPKEDGKTRLVGDVAYQEALGVAGAITPVPGGVGQMTVACLLVNTLRAACAIAGLPKPAV.

NADP(+)-binding positions include 166–168 (GRS), Ser191, and Ile232.

This sequence belongs to the tetrahydrofolate dehydrogenase/cyclohydrolase family. Homodimer.

It carries out the reaction (6R)-5,10-methylene-5,6,7,8-tetrahydrofolate + NADP(+) = (6R)-5,10-methenyltetrahydrofolate + NADPH. The catalysed reaction is (6R)-5,10-methenyltetrahydrofolate + H2O = (6R)-10-formyltetrahydrofolate + H(+). Its pathway is one-carbon metabolism; tetrahydrofolate interconversion. Its function is as follows. Catalyzes the oxidation of 5,10-methylenetetrahydrofolate to 5,10-methenyltetrahydrofolate and then the hydrolysis of 5,10-methenyltetrahydrofolate to 10-formyltetrahydrofolate. This Bradyrhizobium diazoefficiens (strain JCM 10833 / BCRC 13528 / IAM 13628 / NBRC 14792 / USDA 110) protein is Bifunctional protein FolD.